A 169-amino-acid chain; its full sequence is Small ribosomal subunit protein uS5 (169 aa).

One can recognise an S5 DRBM domain in the interval 15-79 (LKEQVVAINR…EAAKKNLRRI (65 aa)).

This sequence belongs to the universal ribosomal protein uS5 family. As to quaternary structure, part of the 30S ribosomal subunit. Contacts proteins S4 and S8.

In terms of biological role, with S4 and S12 plays an important role in translational accuracy. Its function is as follows. Located at the back of the 30S subunit body where it stabilizes the conformation of the head with respect to the body. The chain is Small ribosomal subunit protein uS5 from Solibacter usitatus (strain Ellin6076).